Reading from the N-terminus, the 492-residue chain is 3-octaprenyl-4-hydroxybenzoate carboxy-lyase (492 aa).

Asn-177 contributes to the Mn(2+) binding site. Prenylated FMN is bound by residues 180–182, 194–196, and 199–200; these read IYR, RWL, and RG. Mn(2+) is bound at residue Glu-243. Asp-292 serves as the catalytic Proton donor.

Belongs to the UbiD family. Homohexamer. Prenylated FMN is required as a cofactor. It depends on Mn(2+) as a cofactor.

The protein localises to the cell membrane. The enzyme catalyses a 4-hydroxy-3-(all-trans-polyprenyl)benzoate + H(+) = a 2-(all-trans-polyprenyl)phenol + CO2. It participates in cofactor biosynthesis; ubiquinone biosynthesis. Functionally, catalyzes the decarboxylation of 3-octaprenyl-4-hydroxy benzoate to 2-octaprenylphenol, an intermediate step in ubiquinone biosynthesis. This is 3-octaprenyl-4-hydroxybenzoate carboxy-lyase from Neisseria meningitidis serogroup C / serotype 2a (strain ATCC 700532 / DSM 15464 / FAM18).